The primary structure comprises 293 residues: Protease HtpX (293 aa).

2 helical membrane passes run 4-24 (IALFLLTNLGVMVVFGLILSL) and 32-52 (VMGLMIMAGLFGFGGAFVSLL). A Zn(2+)-binding site is contributed by His139. Glu140 is a catalytic residue. His143 contributes to the Zn(2+) binding site. The next 2 helical transmembrane spans lie at 158–178 (IVNTFVIFISRILAQLAAGFM) and 193–213 (MVYFVVSMVLELVFGIVASTI). Position 222 (Glu222) interacts with Zn(2+).

The protein belongs to the peptidase M48B family. Zn(2+) serves as cofactor.

It localises to the cell inner membrane. The protein is Protease HtpX of Erwinia tasmaniensis (strain DSM 17950 / CFBP 7177 / CIP 109463 / NCPPB 4357 / Et1/99).